Consider the following 641-residue polypeptide: Tetracycline resistance protein TetS (641 aa).

The 242-residue stretch at 1–242 (MKIINIGILA…VITSKLFSPT (242 aa)) folds into the tr-type G domain. GTP is bound by residues 10 to 17 (AHVDAGKT), 74 to 78 (DTPGH), and 128 to 131 (NKID).

This sequence belongs to the TRAFAC class translation factor GTPase superfamily. Classic translation factor GTPase family. TetM/TetO subfamily.

In terms of biological role, abolishes the inhibitory effect of tetracyclin on protein synthesis by a non-covalent modification of the ribosomes. This Listeria monocytogenes protein is Tetracycline resistance protein TetS (tetS).